We begin with the raw amino-acid sequence, 134 residues long: ATP synthase epsilon chain (134 aa).

This sequence belongs to the ATPase epsilon chain family. F-type ATPases have 2 components, CF(1) - the catalytic core - and CF(0) - the membrane proton channel. CF(1) has five subunits: alpha(3), beta(3), gamma(1), delta(1), epsilon(1). CF(0) has three main subunits: a, b and c.

It localises to the cell membrane. In terms of biological role, produces ATP from ADP in the presence of a proton gradient across the membrane. The chain is ATP synthase epsilon chain from Carboxydothermus hydrogenoformans (strain ATCC BAA-161 / DSM 6008 / Z-2901).